The chain runs to 210 residues: Glutathione S-transferase P 1 (210 aa).

Residues 2–81 enclose the GST N-terminal domain; it reads PPYTIVYFPV…HLGRSLGLYG (80 aa). At tyrosine 4 the chain carries Phosphotyrosine; by EGFR. Glutathione-binding positions include tyrosine 8, arginine 14, tryptophan 39, lysine 45, and 52–53; that span reads QL. Residue threonine 62 is modified to Phosphothreonine. 65-66 lines the glutathione pocket; sequence QS. A GST C-terminal domain is found at 83 to 204; it reads NQREAAQMDM…SSPEHVNRPI (122 aa). Lysine 103 and lysine 116 each carry N6-succinyllysine. Lysine 128 is modified (N6-acetyllysine).

Homodimer. Interacts with CDK5. In terms of tissue distribution, ubiquitously expressed.

It is found in the cytoplasm. It localises to the mitochondrion. The protein localises to the nucleus. The enzyme catalyses RX + glutathione = an S-substituted glutathione + a halide anion + H(+). It carries out the reaction prostaglandin J2 + glutathione = prostaglandin J2-S-(R)-glutathione. The catalysed reaction is prostaglandin J2 + glutathione = prostaglandin J2-S-(S)-glutathione. It catalyses the reaction prostaglandin A2 + glutathione = prostaglandin A2-S-(S)-glutathione. The enzyme catalyses 11(S)-hydroxy-14(S),15(S)-epoxy-(5Z,8Z,12E)-eicosatrienoate + glutathione = (11S,15S)-dihydroxy-14(R)-S-glutathionyl-(5Z,8Z,12E)-eicosatrienoate. Its function is as follows. Conjugation of reduced glutathione to a wide number of exogenous and endogenous hydrophobic electrophiles. Involved in the formation of glutathione conjugates of both prostaglandin A2 (PGA2) and prostaglandin J2 (PGJ2). Participates in the formation of novel hepoxilin regioisomers. Negatively regulates CDK5 activity via p25/p35 translocation to prevent neurodegeneration. The polypeptide is Glutathione S-transferase P 1 (Mus musculus (Mouse)).